Reading from the N-terminus, the 358-residue chain is MEAVDRPLRIEETTVSHDVSSCGFISKEEWLNKHPPSGSGWTDEDDDNDDVFSSSFISKEELSDAVHNDPPSGWTDEDDDDQVDPALEKEFYRQIRESDGFDVDIRIPTSSLYVYKCANNDDLRGDIVGICARVGLHWYNFQKGSNLELMHVDKYNSRFCALMTYNITAEAVDPANDSRFTFQTCVTRATCQKDEDLRILTEVCRIKPKIQGTGDEIKRWNDEAIDDIYKGNLPEWISDDTLMSCSEQDHFYRVQESDIREHNWLQLYTEIASYSLWEGDMRLKSCVPLQIKNVLVRTREDFKSKEKLKAGNAIFYISFRGVNTPHGPPQDHRAIVRRTVDGIPGHVCLEFKCLLMDL.

Positions 31 to 82 are disordered; sequence LNKHPPSGSGWTDEDDDNDDVFSSSFISKEELSDAVHNDPPSGWTDEDDDDQ. The span at 58–67 shows a compositional bias: basic and acidic residues; the sequence is SKEELSDAVH.

Belongs to the UPF0725 (EMB2204) family.

The polypeptide is UPF0725 protein At4g29550 (Arabidopsis thaliana (Mouse-ear cress)).